Here is a 335-residue protein sequence, read N- to C-terminus: ATP-dependent 6-phosphofructokinase (335 aa).

Gly11 serves as a coordination point for ATP. Position 21-25 (21-25 (RAVVR)) interacts with ADP. ATP-binding positions include 72 to 73 (RY) and 102 to 105 (GDGS). Residue Asp103 coordinates Mg(2+). 125 to 127 (TID) is a substrate binding site. The Proton acceptor role is filled by Asp127. An ADP-binding site is contributed by Arg154. Residues Arg162 and 169-171 (MGR) each bind substrate. ADP-binding positions include 185 to 187 (GAD) and 213 to 215 (KKH). Residues Glu222, Arg244, and 250-253 (HIQR) each bind substrate.

Belongs to the phosphofructokinase type A (PFKA) family. ATP-dependent PFK group I subfamily. Prokaryotic clade 'B1' sub-subfamily. In terms of assembly, homotetramer. The cofactor is Mg(2+).

Its subcellular location is the cytoplasm. The catalysed reaction is beta-D-fructose 6-phosphate + ATP = beta-D-fructose 1,6-bisphosphate + ADP + H(+). It functions in the pathway carbohydrate degradation; glycolysis; D-glyceraldehyde 3-phosphate and glycerone phosphate from D-glucose: step 3/4. With respect to regulation, allosterically activated by ADP and other diphosphonucleosides, and allosterically inhibited by phosphoenolpyruvate. In terms of biological role, catalyzes the phosphorylation of D-fructose 6-phosphate to fructose 1,6-bisphosphate by ATP, the first committing step of glycolysis. This Streptococcus pneumoniae (strain ATCC BAA-255 / R6) protein is ATP-dependent 6-phosphofructokinase.